The sequence spans 98 residues: NADH-ubiquinone oxidoreductase chain 4L (98 aa).

The next 3 helical transmembrane spans lie at 2–22 (PSISTNIVLAFITALLGMLIF), 29–49 (SLLCLEGMMLSMFILSTLTIL), and 61–81 (ILLLVFAACEAAVGLALLVTV).

This sequence belongs to the complex I subunit 4L family. Core subunit of respiratory chain NADH dehydrogenase (Complex I) which is composed of 45 different subunits.

The protein resides in the mitochondrion inner membrane. It catalyses the reaction a ubiquinone + NADH + 5 H(+)(in) = a ubiquinol + NAD(+) + 4 H(+)(out). Core subunit of the mitochondrial membrane respiratory chain NADH dehydrogenase (Complex I) which catalyzes electron transfer from NADH through the respiratory chain, using ubiquinone as an electron acceptor. Part of the enzyme membrane arm which is embedded in the lipid bilayer and involved in proton translocation. The polypeptide is NADH-ubiquinone oxidoreductase chain 4L (MT-ND4L) (Eulemur rubriventer (Red-bellied lemur)).